The sequence spans 90 residues: Barrier-to-autointegration factor (90 aa).

Residues S2 and S3 each carry the phosphoserine modification. T4 carries the phosphothreonine modification. Phosphoserine is present on S5.

The protein belongs to the BAF family. Homodimer.

Its subcellular location is the nucleus. The protein resides in the chromosome. It is found in the nucleus envelope. It localises to the cytoplasm. Its function is as follows. Non-specific DNA-binding protein that plays key roles in mitotic nuclear reassembly, chromatin organization, DNA damage response, gene expression and intrinsic immunity against foreign DNA. Contains two non-specific double-stranded DNA (dsDNA)-binding sites which promote DNA cross-bridging. Plays a key role in nuclear membrane reformation at the end of mitosis by driving formation of a single nucleus in a spindle-independent manner. Transiently cross-bridges anaphase chromosomes via its ability to bridge distant DNA sites, leading to the formation of a dense chromatin network at the chromosome ensemble surface that limits membranes to the surface. Also acts as a negative regulator of innate immune activation by restricting CGAS activity toward self-DNA upon acute loss of nuclear membrane integrity. Outcompetes CGAS for DNA-binding, thereby preventing CGAS activation and subsequent damaging autoinflammatory responses. Also involved in DNA damage response; acts by inhibiting the ADP-ribosyltransferase activity of PARP1. Involved in the recognition of exogenous dsDNA in the cytosol: associates with exogenous dsDNA immediately after its appearance in the cytosol at endosome breakdown and is required to avoid autophagy. This Danio rerio (Zebrafish) protein is Barrier-to-autointegration factor (banf1).